A 100-amino-acid polypeptide reads, in one-letter code: Aspartyl/glutamyl-tRNA(Asn/Gln) amidotransferase subunit C (100 aa).

It belongs to the GatC family. Heterotrimer of A, B and C subunits.

It catalyses the reaction L-glutamyl-tRNA(Gln) + L-glutamine + ATP + H2O = L-glutaminyl-tRNA(Gln) + L-glutamate + ADP + phosphate + H(+). The enzyme catalyses L-aspartyl-tRNA(Asn) + L-glutamine + ATP + H2O = L-asparaginyl-tRNA(Asn) + L-glutamate + ADP + phosphate + 2 H(+). Allows the formation of correctly charged Asn-tRNA(Asn) or Gln-tRNA(Gln) through the transamidation of misacylated Asp-tRNA(Asn) or Glu-tRNA(Gln) in organisms which lack either or both of asparaginyl-tRNA or glutaminyl-tRNA synthetases. The reaction takes place in the presence of glutamine and ATP through an activated phospho-Asp-tRNA(Asn) or phospho-Glu-tRNA(Gln). The protein is Aspartyl/glutamyl-tRNA(Asn/Gln) amidotransferase subunit C of Petrotoga mobilis (strain DSM 10674 / SJ95).